Reading from the N-terminus, the 121-residue chain is Large ribosomal subunit protein P2 (121 aa).

The segment covering 72–99 (VAVPSGGAPAAATAAAEAPKGGDKAAAP) has biased composition (low complexity). Residues 72–121 (VAVPSGGAPAAATAAAEAPKGGDKAAAPPKEEKKEESEESDADMGFSPFD) form a disordered region.

Belongs to the eukaryotic ribosomal protein P1/P2 family. In terms of assembly, P1 and P2 exist as dimers at the large ribosomal subunit. Phosphorylated.

In terms of biological role, plays an important role in the elongation step of protein synthesis. The chain is Large ribosomal subunit protein P2 from Taenia solium (Pork tapeworm).